Consider the following 257-residue polypeptide: Low affinity immunoglobulin gamma Fc region receptor III-A (257 aa).

The signal sequence occupies residues 1 to 19; that stretch reads MWQLLSPTALLLLVSVPGT. At 20–209 the chain is on the extracellular side; sequence HAEDPPKSVV…ILSFFLPWHQ (190 aa). 2 consecutive Ig-like C2-type domains span residues 25–104 and 108–190; these read PKSV…LRLE and GWLL…VKVT. 2 disulfides stabilise this stretch: cysteine 48–cysteine 90 and cysteine 129–cysteine 173. N-linked (GlcNAc...) asparagine glycans are attached at residues asparagine 64, asparagine 134, and asparagine 162. An N-linked (GlcNAc...) asparagine; in variant N-181 glycan is attached at aspartate 181. The chain crosses the membrane as a helical span at residues 210 to 230; it reads IIFCLVMGFLFAVDTGLYFSV. Residues 231-257 are Cytoplasmic-facing; the sequence is RKVLRSSKEDWRNGKVTWSRDPADKGG.

In terms of assembly, forms a heterooligomeric complex with ITAM-containing signaling subunits FCER1G. Interacts (via transmembrane domain) with signaling subunits; this interaction is a prerequisite for receptor complex expression on the cell surface and intracellular signal transduction. Binds the Fc region of antigen-complexed IgG. Expressed in polymorphonuclear leukocytes, pulmonary alveolar macrophages and peripheral blood mononuclear cells (at protein level). Found in spleen, and at very low levels in lymph nodes but not in thymus or liver.

It is found in the cell membrane. Functionally, receptor for the invariable Fc fragment of immunoglobulin gamma (IgG). Optimally activated upon binding of clustered antigen-IgG complexes displayed on cell surfaces, triggers lysis of antibody-coated cells, a process known as antibody-dependent cellular cytotoxicity (ADCC). Does not bind free monomeric IgG, thus avoiding inappropriate effector cell activation in the absence of antigenic trigger. Mediates IgG effector functions on natural killer (NK) cells. Binds antigen-IgG complexes generated upon infection and triggers NK cell-dependent cytokine production and degranulation to limit viral load and propagation. Fc-binding subunit that associates with FCER1G adapter to form functional signaling complexes. Following the engagement of antigen-IgG complexes, triggers phosphorylation of immunoreceptor tyrosine-based activation motif (ITAM)-containing adapter with subsequent activation of phosphatidylinositol 3-kinase signaling and sustained elevation of intracellular calcium that ultimately drive NK cell activation. Mediates enhanced ADCC in response to afucosylated IgGs. The sequence is that of Low affinity immunoglobulin gamma Fc region receptor III-A from Sus scrofa (Pig).